A 1023-amino-acid chain; its full sequence is Sodium/potassium-transporting ATPase subunit alpha-1 (1023 aa).

A propeptide spanning residues 1 to 5 (MGKGV) is cleaved from the precursor. Residues 1-11 (MGKGVGRDKYE) show a composition bias toward basic and acidic residues. The disordered stretch occupies residues 1–39 (MGKGVGRDKYEPAAVSEQGDKKGKKGKKDRDMDELKKEV). The Cytoplasmic segment spans residues 6–87 (GRDKYEPAAV…NALTPPPTTP (82 aa)). The residue at position 9 (K9) is an N6-acetyllysine. Y10 carries the post-translational modification Phosphotyrosine. S16 bears the Phosphoserine mark. K21 is subject to N6-acetyllysine. Over residues 28 to 39 (KDRDMDELKKEV) the composition is skewed to basic and acidic residues. Phosphoserine is present on residues S40 and S47. Residues 82–84 (PPP) form a phosphoinositide-3 kinase binding region. A helical membrane pass occupies residues 88–108 (EWIKFCRQLFGGFSMLLWIGA). Over 109-131 (ILCFLAYSIQAATEEEPQNDNLY) the chain is Extracellular. Residues 132-152 (LGVVLSAVVIITGCFSYYQEA) form a helical membrane-spanning segment. At 153–288 (KSSKIMESFK…GGQTPIAAEI (136 aa)) the chain is on the cytoplasmic side. Positions 216 to 235 (SSLTGESEPQTRSPDFTNEN) are disordered. S228 bears the Phosphoserine mark. Y260 bears the Phosphotyrosine mark. A helical membrane pass occupies residues 289-308 (EHFIHIITGVAVFLGVSFFI). At 309–320 (LSLILEYTWLEA) the chain is on the extracellular side. A helical membrane pass occupies residues 321-338 (VIFLIGIIVANVPEGLLA). Topologically, residues 339–772 (TVTVCLTLTA…EEGRLIFDNL (434 aa)) are cytoplasmic. D376 serves as the catalytic 4-aspartylphosphate intermediate. Residues S452 and S484 each carry the phosphoserine modification. K487 contacts ATP. A Phosphotyrosine modification is found at Y542. Residues 596-717 (RAAVPDAVGK…QGAIVAVTGD (122 aa)) are mediates interaction with SCN7A. The residue at position 661 (K661) is an N6-succinyllysine. Phosphoserine is present on residues S668 and S675. Mg(2+) is bound by residues D717 and D721. A helical transmembrane segment spans residues 773-792 (KKSIAYTLTSNIPEITPFLI). Topologically, residues 793 to 802 (FIIANIPLPL) are extracellular. A helical transmembrane segment spans residues 803-823 (GTVTILCIDLGTDMVPAISLA). Residues 824–843 (YEQAESDIMKRQPRNPKTDK) lie on the Cytoplasmic side of the membrane. Residues 844–866 (LVNERLISMAYGQIGMIQALGGF) form a helical membrane-spanning segment. Over 867–918 (FTYFVILAENGFLPIHLLGLRVDWDDRWINDVEDSYGQQWTYEQRKIVEFTC) the chain is Extracellular. The chain crosses the membrane as a helical span at residues 919 to 938 (HTAFFVSIVVVQWADLVICK). The Cytoplasmic portion of the chain corresponds to 939 to 951 (TRRNSVFQQGMKN). A Phosphoserine; by PKA modification is found at S943. The helical transmembrane segment at 952 to 970 (KILIFGLFEETALAAFLSY) threads the bilayer. Topologically, residues 971–985 (CPGMGVALRMYPLKP) are extracellular. Residues 986-1006 (TWWFCAFPYSLLIFVYDEVRK) traverse the membrane as a helical segment. The Cytoplasmic segment spans residues 1007-1023 (LIIRRRPGGWVEKETYY).

This sequence belongs to the cation transport ATPase (P-type) (TC 3.A.3) family. Type IIC subfamily. In terms of assembly, the sodium/potassium-transporting ATPase is composed of a catalytic alpha subunit, an auxiliary non-catalytic beta subunit and an additional regulatory subunit. Interacts with regulatory subunit FXYD1. Interacts with regulatory subunit FXYD3. Interacts with SIK1. Binds the HLA class II histocompatibility antigen DR1. Interacts with SLC35G1 and STIM1. Interacts with CLN3; this interaction regulates the sodium/potassium-transporting ATPase complex localization at the plasma membrane. Interacts with SCN7A; activates ATP1A1 P-type sodium:potassium-exchanging transporter activity which indirectly signals to nearby neurons to regulate sodium homeostasis. Post-translationally, phosphorylation on Tyr-10 modulates pumping activity. Phosphorylation of Ser-943 by PKA modulates the response of ATP1A1 to PKC. Dephosphorylation by protein phosphatase 2A (PP2A) following increases in intracellular sodium, leading to increase catalytic activity.

It is found in the cell membrane. It localises to the basolateral cell membrane. The protein localises to the sarcolemma. Its subcellular location is the cell projection. The protein resides in the axon. It is found in the melanosome. The enzyme catalyses K(+)(out) + Na(+)(in) + ATP + H2O = K(+)(in) + Na(+)(out) + ADP + phosphate + H(+). Its function is as follows. This is the catalytic component of the active enzyme, which catalyzes the hydrolysis of ATP coupled with the exchange of sodium and potassium ions across the plasma membrane. This action creates the electrochemical gradient of sodium and potassium ions, providing the energy for active transport of various nutrients. Could also be part of an osmosensory signaling pathway that senses body-fluid sodium levels and controls salt intake behavior as well as voluntary water intake to regulate sodium homeostasis. This is Sodium/potassium-transporting ATPase subunit alpha-1 (ATP1A1) from Homo sapiens (Human).